The primary structure comprises 198 residues: Glycerol-3-phosphate acyltransferase (198 aa).

Helical transmembrane passes span 5–25 (LILL…LWIG), 56–76 (SIVT…PFFF), 84–104 (FWLL…FAGF), 114–134 (AGVI…IFLL), and 158–178 (LFMG…FVVW).

It belongs to the PlsY family. In terms of assembly, probably interacts with PlsX.

It localises to the cell membrane. It catalyses the reaction an acyl phosphate + sn-glycerol 3-phosphate = a 1-acyl-sn-glycero-3-phosphate + phosphate. It functions in the pathway lipid metabolism; phospholipid metabolism. Its function is as follows. Catalyzes the transfer of an acyl group from acyl-phosphate (acyl-PO(4)) to glycerol-3-phosphate (G3P) to form lysophosphatidic acid (LPA). This enzyme utilizes acyl-phosphate as fatty acyl donor, but not acyl-CoA or acyl-ACP. The polypeptide is Glycerol-3-phosphate acyltransferase (Listeria welshimeri serovar 6b (strain ATCC 35897 / DSM 20650 / CCUG 15529 / CIP 8149 / NCTC 11857 / SLCC 5334 / V8)).